A 1925-amino-acid polypeptide reads, in one-letter code: Plexin-D1 (1925 aa).

Over residues 1–21 the composition is skewed to low complexity; it reads MARRAAGGAPPSARAAAAVPL. The disordered stretch occupies residues 1-26; it reads MARRAAGGAPPSARAAAAVPLRPRPH. An N-terminal signal peptide occupies residues 1–48; the sequence is MARRAAGGAPPSARAAAAVPLRPRPHSRGPGLLPLPLLLLLGAARAGA. The Sema domain maps to 49 to 548; that stretch reads LEIQRRFPSP…TSHQMARVKV (500 aa). At 49 to 1271 the chain is on the extracellular side; that stretch reads LEIQRRFPSP…TLQLGGSETA (1223 aa). Disulfide bonds link cysteine 106/cysteine 116 and cysteine 142/cysteine 150. N-linked (GlcNAc...) asparagine glycans are attached at residues asparagine 157 and asparagine 226. 2 disulfide bridges follow: cysteine 324–cysteine 447 and cysteine 347–cysteine 391. A glycan (N-linked (GlcNAc...) asparagine) is linked at asparagine 483. 5 cysteine pairs are disulfide-bonded: cysteine 551–cysteine 568, cysteine 557–cysteine 602, cysteine 560–cysteine 577, cysteine 571–cysteine 583, and cysteine 639–cysteine 663. IPT/TIG domains lie at 893 to 977, 983 to 1065, and 1071 to 1145; these read PEIR…SREQ, PTVH…NLTF, and PVIT…FING. Asparagine 967 is a glycosylation site (N-linked (GlcNAc...) asparagine). An N-linked (GlcNAc...) asparagine glycan is attached at asparagine 1120. A helical transmembrane segment spans residues 1272-1292; sequence IVVSIVICSVLLLLSVVALFV. The Cytoplasmic segment spans residues 1293-1925; that stretch reads FCTKSRRAER…NNIYECYSEA (633 aa).

Belongs to the plexin family. As to quaternary structure, interacts with NRP1 and SEMA4A. Interacts with SH3BP1; they dissociate upon SEMA3E binding to PLXND1 allowing SH3BP1 to transduce downstream signal through RAC1 inactivation. As to expression, detected in embryonic heart and vascular endothelium, brain, dorsal root ganglia, adrenal gland, lung mesenchyme, small intestine and in the ossification centers of vertebral bodies.

It localises to the cell membrane. It is found in the cell projection. The protein localises to the lamellipodium membrane. In terms of biological role, cell surface receptor for SEMA4A and for class 3 semaphorins, such as SEMA3A, SEMA3C and SEMA3E. Plays an important role in cell-cell signaling, and in regulating the migration of a wide spectrum of cell types. Regulates the migration of thymocytes in the medulla. Regulates endothelial cell migration. Plays an important role in ensuring the specificity of synapse formation. Mediates anti-angiogenic signaling in response to SEMA3E. Required for normal development of the heart and vasculature. This chain is Plexin-D1 (Plxnd1), found in Mus musculus (Mouse).